Consider the following 463-residue polypeptide: Mitochondrial distribution and morphology protein 10 (463 aa).

It belongs to the MDM10 family. In terms of assembly, component of the ER-mitochondria encounter structure (ERMES) or MDM complex, composed of MMM1, MDM10, MDM12 and MDM34. Associates with the mitochondrial outer membrane sorting assembly machinery SAM(core) complex.

The protein localises to the mitochondrion outer membrane. Its function is as follows. Component of the ERMES/MDM complex, which serves as a molecular tether to connect the endoplasmic reticulum and mitochondria. Components of this complex are involved in the control of mitochondrial shape and protein biogenesis and may function in phospholipid exchange. MDM10 is involved in the late assembly steps of the general translocase of the mitochondrial outer membrane (TOM complex). Functions in the TOM40-specific route of the assembly of outer membrane beta-barrel proteins, including the association of TOM40 with the receptor TOM22 and small TOM proteins. Can associate with the SAM(core) complex as well as the MDM12-MMM1 complex, both involved in late steps of the major beta-barrel assembly pathway, that is responsible for biogenesis of all outer membrane beta-barrel proteins. May act as a switch that shuttles between both complexes and channels precursor proteins into the TOM40-specific pathway. Plays a role in mitochondrial morphology and in the inheritance of mitochondria. This Candida dubliniensis (strain CD36 / ATCC MYA-646 / CBS 7987 / NCPF 3949 / NRRL Y-17841) (Yeast) protein is Mitochondrial distribution and morphology protein 10.